The primary structure comprises 406 residues: Argininosuccinate synthase (406 aa).

ATP contacts are provided by residues 10–18 (AYSGGLDTS) and Ala37. L-citrulline contacts are provided by Tyr88 and Ser93. Gly118 lines the ATP pocket. L-aspartate contacts are provided by Thr120, Asn124, and Asp125. Residue Asn124 participates in L-citrulline binding. Residues Arg128, Ser179, Ser188, Glu264, and Tyr276 each contribute to the L-citrulline site.

This sequence belongs to the argininosuccinate synthase family. Type 1 subfamily. Homotetramer.

The protein resides in the cytoplasm. It catalyses the reaction L-citrulline + L-aspartate + ATP = 2-(N(omega)-L-arginino)succinate + AMP + diphosphate + H(+). Its pathway is amino-acid biosynthesis; L-arginine biosynthesis; L-arginine from L-ornithine and carbamoyl phosphate: step 2/3. This chain is Argininosuccinate synthase, found in Roseobacter denitrificans (strain ATCC 33942 / OCh 114) (Erythrobacter sp. (strain OCh 114)).